The sequence spans 375 residues: Succinyl-diaminopimelate desuccinylase (375 aa).

H66 is a binding site for Zn(2+). D68 is an active-site residue. D99 contacts Zn(2+). Residue E133 is the Proton acceptor of the active site. Positions 134, 162, and 348 each coordinate Zn(2+).

The protein belongs to the peptidase M20A family. DapE subfamily. In terms of assembly, homodimer. Zn(2+) is required as a cofactor. Requires Co(2+) as cofactor.

It catalyses the reaction N-succinyl-(2S,6S)-2,6-diaminopimelate + H2O = (2S,6S)-2,6-diaminopimelate + succinate. Its pathway is amino-acid biosynthesis; L-lysine biosynthesis via DAP pathway; LL-2,6-diaminopimelate from (S)-tetrahydrodipicolinate (succinylase route): step 3/3. In terms of biological role, catalyzes the hydrolysis of N-succinyl-L,L-diaminopimelic acid (SDAP), forming succinate and LL-2,6-diaminopimelate (DAP), an intermediate involved in the bacterial biosynthesis of lysine and meso-diaminopimelic acid, an essential component of bacterial cell walls. The chain is Succinyl-diaminopimelate desuccinylase from Buchnera aphidicola subsp. Acyrthosiphon pisum (strain APS) (Acyrthosiphon pisum symbiotic bacterium).